Reading from the N-terminus, the 172-residue chain is Ribosome maturation factor RimM (172 aa).

The 74-residue stretch at 95 to 168 (QEGEFYYHQI…CVDVELMEGL (74 aa)) folds into the PRC barrel domain.

The protein belongs to the RimM family. In terms of assembly, binds ribosomal protein uS19.

Its subcellular location is the cytoplasm. Functionally, an accessory protein needed during the final step in the assembly of 30S ribosomal subunit, possibly for assembly of the head region. Essential for efficient processing of 16S rRNA. May be needed both before and after RbfA during the maturation of 16S rRNA. It has affinity for free ribosomal 30S subunits but not for 70S ribosomes. This Streptococcus pyogenes serotype M49 (strain NZ131) protein is Ribosome maturation factor RimM.